We begin with the raw amino-acid sequence, 205 residues long: High frequency lysogenization protein HflD homolog (205 aa).

It belongs to the HflD family.

The protein localises to the cytoplasm. The protein resides in the cell inner membrane. The polypeptide is High frequency lysogenization protein HflD homolog (Vibrio atlanticus (strain LGP32) (Vibrio splendidus (strain Mel32))).